Reading from the N-terminus, the 214-residue chain is Adenylate kinase (214 aa).

10–15 (GAGKGT) serves as a coordination point for ATP. Positions 30–59 (STGDMLRAAVKAGTPLGLEAKKVMDAGQLV) are NMP. AMP contacts are provided by residues Thr31, Arg36, 57–59 (QLV), 85–88 (GFPR), and Gln92. Residues 122–159 (GRRVHSGSGRVYHVVFNPPKVEGKDDVTGEDLSIRPDD) form an LID region. Residues Arg123 and 132–133 (VY) each bind ATP. Positions 156 and 167 each coordinate AMP. Residue Gln200 coordinates ATP.

The protein belongs to the adenylate kinase family. Monomer.

The protein localises to the cytoplasm. The catalysed reaction is AMP + ATP = 2 ADP. Its pathway is purine metabolism; AMP biosynthesis via salvage pathway; AMP from ADP: step 1/1. Its function is as follows. Catalyzes the reversible transfer of the terminal phosphate group between ATP and AMP. Plays an important role in cellular energy homeostasis and in adenine nucleotide metabolism. This Shewanella denitrificans (strain OS217 / ATCC BAA-1090 / DSM 15013) protein is Adenylate kinase.